The sequence spans 492 residues: Glycylpeptide N-tetradecanoyltransferase (492 aa).

Positions 1 to 22 (MSDSKDRKGKAPEGQSSEKKDG) are enriched in basic and acidic residues. Residues 1–45 (MSDSKDRKGKAPEGQSSEKKDGAVNITPQMAESLLENNPALRNET) are disordered. Residues 82–85 (YKFW), 215–217 (LCI), and 223–227 (SKRLT) contribute to the tetradecanoyl-CoA site. The active-site Proton acceptor; via carboxylate is Leu-492.

It belongs to the NMT family. In terms of assembly, monomer.

It localises to the cytoplasm. The enzyme catalyses N-terminal glycyl-[protein] + tetradecanoyl-CoA = N-tetradecanoylglycyl-[protein] + CoA + H(+). Adds a myristoyl group to the N-terminal glycine residue of certain cellular proteins. In Aspergillus fumigatus (strain ATCC MYA-4609 / CBS 101355 / FGSC A1100 / Af293) (Neosartorya fumigata), this protein is Glycylpeptide N-tetradecanoyltransferase (nmt1).